We begin with the raw amino-acid sequence, 297 residues long: tRNA dimethylallyltransferase (297 aa).

15–22 (GPTASGKS) is a binding site for ATP. Position 17–22 (17–22 (TASGKS)) interacts with substrate. 2 interaction with substrate tRNA regions span residues 40-43 (DSMQ) and 164-168 (QRIVR).

It belongs to the IPP transferase family. In terms of assembly, monomer. Requires Mg(2+) as cofactor.

It carries out the reaction adenosine(37) in tRNA + dimethylallyl diphosphate = N(6)-dimethylallyladenosine(37) in tRNA + diphosphate. Functionally, catalyzes the transfer of a dimethylallyl group onto the adenine at position 37 in tRNAs that read codons beginning with uridine, leading to the formation of N6-(dimethylallyl)adenosine (i(6)A). The chain is tRNA dimethylallyltransferase from Rhizobium johnstonii (strain DSM 114642 / LMG 32736 / 3841) (Rhizobium leguminosarum bv. viciae).